A 241-amino-acid polypeptide reads, in one-letter code: Agamous-like MADS-box protein AP1 (241 aa).

In terms of domain architecture, MADS-box spans 1–61; the sequence is MGRGRVQLKR…GKLFEYSTDS (61 aa). A K-box domain is found at 88-178; it reads QGNWSLEYSK…AKEIKEKEKT (91 aa).

Expressed in tendrils and flowers.

Its subcellular location is the nucleus. In terms of biological role, probable transcription factor involved in flower development. This is Agamous-like MADS-box protein AP1 from Vitis vinifera (Grape).